A 162-amino-acid chain; its full sequence is MKAKSLTLISITVMFFLFLIYSFNDLFFYSEVKYGDIHEHLDLRMQGIRFSLSHYIIDDKSQLVISEGIYGIGLKMPTGKYYLFPLHSYQSSPDNMARGSLNSLASPLSLYVYEIHNKKNNVVTFFNGDRGFIDVNGETIHLSSLFLGVQGEHIHTSYHDVS.

The polypeptide is Protein PsaF (psaF) (Yersinia pestis).